A 460-amino-acid chain; its full sequence is MKESNSRREFLSQSGKMVTAAALFGTSVPLAHAAVAGTLNCEANNTMKITDPHYYLDNVLLETGFDYENGVAVQTRTARQTVEIQDGKIVALRENKLHPDATLPHYDAGGKLMLPTTRDMHIHLDKTFYGGPWRSLNRPAGTTIQDMIKLEQKMLPELQPYTQERAEKLIDLLQSKGTTIARSHCNIEPVSGLKNLQNLQAVLARRQAGFECEIVAFPQHGLLLSKSEPLMREAMQAGAHYVGGLDPTSVDGAMEKSLDTMFQIALDYDKGVDIHLHETTPAGVAAINYMVETVEKTPQLKGKLTISHAFALATLNEQQVDELANRMVVQQISIASTVPIGTLHMPLKQLHDKGVKVMTGTDSVIDHWSPYGLGDMLEKANLYAQLYIRPNEQNLSRSLFLATGDVLPLNEKGERVWPKAQDDASFVLVDASCSAEAVARISPRTATFHKGQLVWGSVAG.

Positions 1 to 33 (MKESNSRREFLSQSGKMVTAAALFGTSVPLAHA) form a signal peptide, tat-type signal.

The protein belongs to the metallo-dependent hydrolases superfamily. Exported by the Tat system. The position of the signal peptide cleavage has not been experimentally proven. Can also be exported by the Sec system.

This is an uncharacterized protein from Escherichia coli (strain K12).